The sequence spans 108 residues: Evasin P1127 (108 aa).

The signal sequence occupies residues 1–28 (MEAKTFAFLEIAMFIALGIQTFVAVTDA). 3 disulfides stabilise this stretch: Cys41–Cys63, Cys45–Cys65, and Cys56–Cys76. Asn44 carries an N-linked (GlcNAc...) asparagine glycan. N-linked (GlcNAc...) asparagine glycosylation is present at Asn89.

Its subcellular location is the secreted. Functionally, salivary chemokine-binding protein which binds to host chemokines CXCL1, CXCL2, CXCL3, CXCL5 and CXCL8. The sequence is that of Evasin P1127 from Ixodes ricinus (Common tick).